The primary structure comprises 428 residues: Light-independent protochlorophyllide reductase subunit N (428 aa).

Residues Cys-29, Cys-54, and Cys-115 each coordinate [4Fe-4S] cluster.

It belongs to the BchN/ChlN family. Protochlorophyllide reductase is composed of three subunits; BchL, BchN and BchB. Forms a heterotetramer of two BchB and two BchN subunits. Requires [4Fe-4S] cluster as cofactor.

It catalyses the reaction chlorophyllide a + oxidized 2[4Fe-4S]-[ferredoxin] + 2 ADP + 2 phosphate = protochlorophyllide a + reduced 2[4Fe-4S]-[ferredoxin] + 2 ATP + 2 H2O. The protein operates within porphyrin-containing compound metabolism; bacteriochlorophyll biosynthesis (light-independent). In terms of biological role, component of the dark-operative protochlorophyllide reductase (DPOR) that uses Mg-ATP and reduced ferredoxin to reduce ring D of protochlorophyllide (Pchlide) to form chlorophyllide a (Chlide). This reaction is light-independent. The NB-protein (BchN-BchB) is the catalytic component of the complex. This is Light-independent protochlorophyllide reductase subunit N from Cereibacter sphaeroides (strain ATCC 17029 / ATH 2.4.9) (Rhodobacter sphaeroides).